Reading from the N-terminus, the 188-residue chain is Ribosome-recycling factor (188 aa).

This sequence belongs to the RRF family.

Its subcellular location is the cytoplasm. Responsible for the release of ribosomes from messenger RNA at the termination of protein biosynthesis. May increase the efficiency of translation by recycling ribosomes from one round of translation to another. This Phenylobacterium zucineum (strain HLK1) protein is Ribosome-recycling factor.